The sequence spans 119 residues: uncharacterized protein (119 aa).

The segment at 86 to 119 is disordered; the sequence is KKQRMKMLTEQEEEEEEEEEEPPKPKKKVINRKK. Acidic residues predominate over residues 95–106; that stretch reads EQEEEEEEEEEE. Over residues 110–119 the composition is skewed to basic residues; that stretch reads PKKKVINRKK.

This is an uncharacterized protein from Sputnik virophage.